A 165-amino-acid chain; its full sequence is MKVVQGDYRGEGLKIAVVVPRFNDLVTSKLLEGALDGLKRHGVSDENITVVRIPGSMEAIYTLKRLLDLGVHDAIIVLGAVIRGETYHFNVVANEIGKAVAQFNMTSDIPIVFGVLTTDTLEQALNRAGAKSGNKGFEAAMVAIEMANLRKRLRRDVFESDSNGR.

Residues phenylalanine 22, 56–58 (SME), and 80–82 (AVI) each bind 5-amino-6-(D-ribitylamino)uracil. 85–86 (ET) contributes to the (2S)-2-hydroxy-3-oxobutyl phosphate binding site. Histidine 88 (proton donor) is an active-site residue. Phenylalanine 113 is a binding site for 5-amino-6-(D-ribitylamino)uracil. Arginine 127 contacts (2S)-2-hydroxy-3-oxobutyl phosphate.

This sequence belongs to the DMRL synthase family.

The enzyme catalyses (2S)-2-hydroxy-3-oxobutyl phosphate + 5-amino-6-(D-ribitylamino)uracil = 6,7-dimethyl-8-(1-D-ribityl)lumazine + phosphate + 2 H2O + H(+). Its pathway is cofactor biosynthesis; riboflavin biosynthesis; riboflavin from 2-hydroxy-3-oxobutyl phosphate and 5-amino-6-(D-ribitylamino)uracil: step 1/2. Functionally, catalyzes the formation of 6,7-dimethyl-8-ribityllumazine by condensation of 5-amino-6-(D-ribitylamino)uracil with 3,4-dihydroxy-2-butanone 4-phosphate. This is the penultimate step in the biosynthesis of riboflavin. In Thermotoga sp. (strain RQ2), this protein is 6,7-dimethyl-8-ribityllumazine synthase.